We begin with the raw amino-acid sequence, 260 residues long: Acyl-coenzyme A diphosphatase FITM2 (260 aa).

At 1–23 (MERLENCAQMFQRRFLNESFRRH) the chain is on the cytoplasmic side. A helical membrane pass occupies residues 24–44 (CPVLLACIVLGGSLLKELCPL). The Lumenal segment spans residues 45–57 (PDSYWNNKRNVLN). The helical transmembrane segment at 58–78 (VYFVKFSWGWTLWLLLPFIAL) threads the bilayer. Residues 79 to 93 (TNYKLTRSTTKVLRR) are Cytoplasmic-facing. Residues 94-114 (LSSLLVSTLIWYLCTNLFLYI) traverse the membrane as a helical segment. The Lumenal segment spans residues 115-145 (ENITGSCYESEAMSDPKEHQDRRECRLHSGY). A helical membrane pass occupies residues 146 to 166 (WHGFDISGHCFLLSYCILLIL). The active site involves His154. Over 167-189 (EETSIISNIRFERHWHRMAINAQ) the chain is Cytoplasmic. The next 2 membrane-spanning stretches (helical) occupy residues 190 to 210 (FAALSILVIIWVWMFLCTAVY) and 211 to 231 (FHNIFQKVIGTAFGILAWYIT). His212 is an active-site residue. The Cytoplasmic segment spans residues 232–260 (YRWWYLQPISPGLPPASASRSGKEPIYRN).

It belongs to the FIT family. FIT2 subfamily.

The protein resides in the endoplasmic reticulum membrane. It catalyses the reaction an acyl-CoA + H2O = an acyl-4'-phosphopantetheine + adenosine 3',5'-bisphosphate + 2 H(+). Fatty acyl-coenzyme A (CoA) diphosphatase that hydrolyzes fatty acyl-CoA to yield acyl-4'-phosphopantetheine and adenosine 3',5'-bisphosphate. Preferentially hydrolyzes unsaturated long-chain acyl-CoA substrates in the endoplasmic reticulum (ER) lumen. This catalytic activity is required for maintaining ER structure and for lipid droplets (LDs) biogenesis, which are lipid storage organelles involved in maintaining lipid and energy homeostasis. May directly bind to diacylglycerol (DAGs) and triacylglycerol, which is also important for LD biogenesis. May support directional budding of nacent LDs from the ER into the cytosol by reducing DAG levels at sites of LD formation. May play a role in the regulation of cell morphology, ER morphology and cytoskeletal organization. This chain is Acyl-coenzyme A diphosphatase FITM2, found in Xenopus tropicalis (Western clawed frog).